The following is a 285-amino-acid chain: Eukaryotic translation initiation factor 3 subunit F-2 (285 aa).

Residues 11–145 (VFLKPLVLFQ…TRLYCAVEMG (135 aa)) form the MPN domain.

It belongs to the eIF-3 subunit F family. Component of the eukaryotic translation initiation factor 3 (eIF-3) complex. The eIF-3 complex interacts with pix.

The protein localises to the cytoplasm. In terms of biological role, component of the eukaryotic translation initiation factor 3 (eIF-3) complex, which is involved in protein synthesis of a specialized repertoire of mRNAs and, together with other initiation factors, stimulates binding of mRNA and methionyl-tRNAi to the 40S ribosome. The eIF-3 complex specifically targets and initiates translation of a subset of mRNAs involved in cell proliferation. In Drosophila simulans (Fruit fly), this protein is Eukaryotic translation initiation factor 3 subunit F-2.